Consider the following 142-residue polypeptide: MFQGASSLSLDAKGRLSVPTRHRDALTAQAGGQLTLTKHPDGCLMVFPRPEWEKFRERIAQLPMSAQWWKRIFLGNAMDVEMDGTGRVLVSPELREAAGLSKDAILLGMGNHFELWDKATYEAKEAAAMQAEMPDVFKDFSF.

2 consecutive SpoVT-AbrB domains span residues 5 to 51 and 77 to 120; these read ASSL…PRPE and AMDV…DKAT.

It belongs to the MraZ family. As to quaternary structure, forms oligomers.

The protein localises to the cytoplasm. It localises to the nucleoid. The chain is Transcriptional regulator MraZ from Acidovorax ebreus (strain TPSY) (Diaphorobacter sp. (strain TPSY)).